We begin with the raw amino-acid sequence, 445 residues long: Methylphloroacetophenone oxidase (445 aa).

The helical transmembrane segment at 25–45 threads the bilayer; the sequence is VLSIALIGVACAISIRSILYV. N-linked (GlcNAc...) asparagine glycosylation is present at Asn-51.

Belongs to the cytochrome P450 family.

The protein localises to the membrane. Its pathway is secondary metabolite biosynthesis. Methylphloroacetophenone oxidase; part of the gene cluster that mediates the biosynthesis of usnic acid, a dibenzofuran lichen product possessing a broad spectrum of biological activities. Two genes, mpas and mpao, comprise the usnic acid biosynthetic gene cluster with a single post-PKS enzyme, the methylphloracetophenone oxidase (mpao). The methylphloroacetophenone synthase (mpas) is a non-reducing polyketide synthase that produces methylphloracetophenone from acetate via a methylated tetraketide intermediate. The methylphloroacetophenone oxidase then carries out the oxidative dimerization of methylphloracetophenone to usnic acid. The sequence is that of Methylphloroacetophenone oxidase from Cladonia uncialis (Cup lichen).